A 349-amino-acid chain; its full sequence is Thioredoxin reductase, mitochondrial (349 aa).

The N-terminal 30 residues, 1–30 (MLLVRNSTLGRLSSLRGFFRNINESNIFYR), are a transit peptide targeting the mitochondrion. FAD contacts are provided by residues 41-44 (SGPA), 70-71 (IA), Gln75, Asn84, Val117, Cys175, Asp318, and 325-327 (RQA). Cys172 and Cys175 form a disulfide bridge.

The protein belongs to the class-II pyridine nucleotide-disulfide oxidoreductase family. As to quaternary structure, homodimer. FAD is required as a cofactor.

Its subcellular location is the mitochondrion. The enzyme catalyses [thioredoxin]-dithiol + NADP(+) = [thioredoxin]-disulfide + NADPH + H(+). The protein is Thioredoxin reductase, mitochondrial (TRR1) of Kluyveromyces lactis (strain ATCC 8585 / CBS 2359 / DSM 70799 / NBRC 1267 / NRRL Y-1140 / WM37) (Yeast).